Consider the following 131-residue polypeptide: Large ribosomal subunit protein bL17 (131 aa).

It belongs to the bacterial ribosomal protein bL17 family. As to quaternary structure, part of the 50S ribosomal subunit. Contacts protein L32.

This chain is Large ribosomal subunit protein bL17, found in Cupriavidus necator (strain ATCC 17699 / DSM 428 / KCTC 22496 / NCIMB 10442 / H16 / Stanier 337) (Ralstonia eutropha).